The primary structure comprises 51 residues: Putative inactivation escape 1 protein (51 aa).

In terms of tissue distribution, highly expressed in pancreas, heart and liver followed by brain, placenta, lung, skeletal muscle and kidney. Mostly expressed in females.

This Homo sapiens (Human) protein is Putative inactivation escape 1 protein (INE1).